The chain runs to 485 residues: Adenylate kinase 8 (485 aa).

Adenylate kinase stretches follow at residues 58-258 (PRVF…TFVL) and 269-472 (PRIL…YTVS). 67–72 (ASGKHT) lines the ATP pocket. An NMP 1 region spans residues 87-113 (TPESVLSSDVSLLAKEAQSYRDKGQEV). Residues 140–143 (GFPK) and Gln147 contribute to the AMP site. The LID 1 stretch occupies residues 177–206 (GKRIDTANGEVYHTTFDWPSDPTVQRNLVE). Arg218 lines the AMP pocket. 278 to 283 (GSGRSL) contributes to the ATP binding site. Residues 298-327 (CCGQVLKEAVADQTKLGEVIQPYIENDQQV) form an NMP 2 region. AMP-binding positions include 325-327 (QQV), 354-357 (GFPR), and Gln361. Positions 391–424 (LCMTDPVSGERYHDIYKPAPSSEVHERLQQNPRH) are LID 2. Residue Arg432 participates in AMP binding.

It belongs to the adenylate kinase family.

The protein localises to the cytoplasm. It localises to the cytosol. It catalyses the reaction AMP + ATP = 2 ADP. The enzyme catalyses a 2'-deoxyribonucleoside 5'-diphosphate + ATP = a 2'-deoxyribonucleoside 5'-triphosphate + ADP. It carries out the reaction a ribonucleoside 5'-diphosphate + ATP = a ribonucleoside 5'-triphosphate + ADP. Functionally, nucleoside monophosphate (NMP) kinase that catalyzes the reversible transfer of the terminal phosphate group between nucleoside triphosphates and monophosphates. Has highest activity toward AMP, and weaker activity toward dAMP, CMP and dCMP. Also displays broad nucleoside diphosphate kinase activity. In Xenopus tropicalis (Western clawed frog), this protein is Adenylate kinase 8 (ak8).